We begin with the raw amino-acid sequence, 512 residues long: ATP synthase subunit alpha 2 (512 aa).

Residue 169 to 176 (GDRQTGKT) coordinates ATP.

Belongs to the ATPase alpha/beta chains family. F-type ATPases have 2 components, CF(1) - the catalytic core - and CF(0) - the membrane proton channel. CF(1) has five subunits: alpha(3), beta(3), gamma(1), delta(1), epsilon(1). CF(0) has three main subunits: a(1), b(2) and c(9-12). The alpha and beta chains form an alternating ring which encloses part of the gamma chain. CF(1) is attached to CF(0) by a central stalk formed by the gamma and epsilon chains, while a peripheral stalk is formed by the delta and b chains.

The protein resides in the cell inner membrane. It catalyses the reaction ATP + H2O + 4 H(+)(in) = ADP + phosphate + 5 H(+)(out). Functionally, produces ATP from ADP in the presence of a proton gradient across the membrane. The alpha chain is a regulatory subunit. The protein is ATP synthase subunit alpha 2 of Vibrio campbellii (strain ATCC BAA-1116).